A 311-amino-acid chain; its full sequence is Urease accessory protein UreD 3 (311 aa).

It belongs to the UreD family. UreD, UreF and UreG form a complex that acts as a GTP-hydrolysis-dependent molecular chaperone, activating the urease apoprotein by helping to assemble the nickel containing metallocenter of UreC. The UreE protein probably delivers the nickel.

The protein localises to the cytoplasm. In terms of biological role, required for maturation of urease via the functional incorporation of the urease nickel metallocenter. This is Urease accessory protein UreD 3 from Methylorubrum populi (strain ATCC BAA-705 / NCIMB 13946 / BJ001) (Methylobacterium populi).